Consider the following 460-residue polypeptide: Lipase member H (460 aa).

Residues 1 to 24 form the signal peptide; sequence MLLRFYFNGLLFVGCLLSWGRSDT. N-linked (GlcNAc...) asparagine glycans are attached at residues asparagine 67 and asparagine 75. Catalysis depends on serine 163, which acts as the Nucleophile. Asparagine 177 carries N-linked (GlcNAc...) asparagine glycosylation. Residue aspartate 187 is the Charge relay system of the active site. Cysteines 242 and 255 form a disulfide. Histidine 257 acts as the Charge relay system in catalysis. 2 disulfides stabilise this stretch: cysteine 279–cysteine 290 and cysteine 293–cysteine 301. Asparagine 289 is a glycosylation site (N-linked (GlcNAc...) asparagine). Asparagine 366 carries an N-linked (GlcNAc...) asparagine glycan. A disulfide bridge links cysteine 436 with cysteine 455.

Belongs to the AB hydrolase superfamily. Lipase family.

The protein localises to the secreted. The protein resides in the cell membrane. It carries out the reaction 1-hexadecanoyl-2-(9Z-octadecenoyl)-sn-glycero-3-phosphate + H2O = 2-(9Z-octadecenoyl)-sn-glycero-3-phosphate + hexadecanoate + H(+). Its function is as follows. Hydrolyzes specifically phosphatidic acid (PA) to produce 2-acyl lysophosphatidic acid (LPA; a potent bioactive lipid mediator) and fatty acid. Does not hydrolyze other phospholipids, like phosphatidylserine (PS), phosphatidylcholine (PC) and phosphatidylethanolamine (PE) or triacylglycerol (TG). The protein is Lipase member H (liph) of Xenopus tropicalis (Western clawed frog).